The following is a 178-amino-acid chain: MFGIHSLAGVLLLVIVQSQLASPLQEAEDNSSLETADSLLEDLRGVPNMKRQSEGTFSNYYSKYQEERMARDFLHWLMNSKRSGAPSKRHADGTYTSDVSTYLQDQAAKDFVSWLKSGPARRESAEESMNGPMSRRHVDGSFTSDVNKVLDSLAAKEYLLWVMTSKTSGKSNKRQEDH.

Positions 1-21 are cleaved as a signal peptide; that stretch reads MFGIHSLAGVLLLVIVQSQLA. 3 propeptides span residues 83–87, 123–134, and 171–178; these read SGAPS, ESAEESMNGPMS, and SNKRQEDH.

It belongs to the glucagon family.

The protein localises to the secreted. In terms of biological role, promotes hydrolysis of glycogen and lipids, and raises the blood sugar level. This is Glucagon-2 (gcg2) from Oncorhynchus mykiss (Rainbow trout).